An 82-amino-acid chain; its full sequence is Small ribosomal subunit protein bS18 (82 aa).

The protein belongs to the bacterial ribosomal protein bS18 family. Part of the 30S ribosomal subunit. Forms a tight heterodimer with protein bS6.

In terms of biological role, binds as a heterodimer with protein bS6 to the central domain of the 16S rRNA, where it helps stabilize the platform of the 30S subunit. This Methylobacterium nodulans (strain LMG 21967 / CNCM I-2342 / ORS 2060) protein is Small ribosomal subunit protein bS18.